The primary structure comprises 165 residues: LDYRWMPYKRISTNLKKALIASEDARFAGHGGFDWGGIQNAIRRNRNSGKVKAGGSTISQQLAKNLFLNESRSYIRKGEEAAITAMMEAVTDKDRIFELYLNSIEWHYGVFGAEAASRYFYQIPAAKLTKQQAAKLTARVPAPLYYADHPKSKRLRNKTNIVLRR.

Belongs to the glycosyltransferase 51 family.

The protein localises to the cell inner membrane. The enzyme catalyses [GlcNAc-(1-&gt;4)-Mur2Ac(oyl-L-Ala-gamma-D-Glu-L-Lys-D-Ala-D-Ala)](n)-di-trans,octa-cis-undecaprenyl diphosphate + beta-D-GlcNAc-(1-&gt;4)-Mur2Ac(oyl-L-Ala-gamma-D-Glu-L-Lys-D-Ala-D-Ala)-di-trans,octa-cis-undecaprenyl diphosphate = [GlcNAc-(1-&gt;4)-Mur2Ac(oyl-L-Ala-gamma-D-Glu-L-Lys-D-Ala-D-Ala)](n+1)-di-trans,octa-cis-undecaprenyl diphosphate + di-trans,octa-cis-undecaprenyl diphosphate + H(+). The protein operates within cell wall biogenesis; peptidoglycan biosynthesis. Its function is as follows. Peptidoglycan polymerase that catalyzes glycan chain elongation from lipid-linked precursors. The chain is Biosynthetic peptidoglycan transglycosylase from Neisseria meningitidis.